The chain runs to 206 residues: MNQQKSLTLIVALTTSYGIGRSNSLPWKLKKEISYFKRVTSFVPTFDSFESMNVVLMGRKTWESIPLQFRPLKGRINVVITRNESLDLGNGIHSAKSLDHALELLYRTYGSESSVQINRIFVIGGAQLYKAAMDHPKLDRIMATIIYKDIHCDVFFPLKFRDKEWSSVWKKEKHSDLESWVGTKVPHGKINEDGFDYEFEMWTRDL.

Residues 6–204 (SLTLIVALTT…FDYEFEMWTR (199 aa)) form the DHFR domain. NADP(+) contacts are provided by residues Ala12 and 18–24 (GIGRSNS). Residue 32–37 (EISYFK) participates in substrate binding. Position 59–61 (59–61 (RKT)) interacts with NADP(+). Substrate is bound at residue Arg75. NADP(+) contacts are provided by residues 81–83 (TRN) and 124–131 (GGAQLYKA).

It belongs to the dihydrofolate reductase family.

It catalyses the reaction (6S)-5,6,7,8-tetrahydrofolate + NADP(+) = 7,8-dihydrofolate + NADPH + H(+). Its pathway is cofactor biosynthesis; tetrahydrofolate biosynthesis; 5,6,7,8-tetrahydrofolate from 7,8-dihydrofolate: step 1/1. In terms of biological role, key enzyme in folate metabolism. Catalyzes an essential reaction for de novo glycine and purine synthesis, and for DNA precursor synthesis. The chain is Dihydrofolate reductase from Pneumocystis carinii.